Here is a 121-residue protein sequence, read N- to C-terminus: MARISGIDIPREKRVEVALTYIYGIGLTRAQAILEKSGVNPDIRVKDLDDGDIQKLRAVTEEFTLEGDLRRQEGMALKRLQDIGCVRGRRHRMSLPVRGQRTRTNARTRRGARKTVAGRKK.

Residues 97–121 (VRGQRTRTNARTRRGARKTVAGRKK) are disordered. The span at 100–121 (QRTRTNARTRRGARKTVAGRKK) shows a compositional bias: basic residues.

This sequence belongs to the universal ribosomal protein uS13 family. Part of the 30S ribosomal subunit. Forms a loose heterodimer with protein S19. Forms two bridges to the 50S subunit in the 70S ribosome.

Functionally, located at the top of the head of the 30S subunit, it contacts several helices of the 16S rRNA. In the 70S ribosome it contacts the 23S rRNA (bridge B1a) and protein L5 of the 50S subunit (bridge B1b), connecting the 2 subunits; these bridges are implicated in subunit movement. Contacts the tRNAs in the A and P-sites. In Prochlorococcus marinus (strain NATL1A), this protein is Small ribosomal subunit protein uS13.